Consider the following 423-residue polypeptide: E3 ubiquitin-protein ligase makorin-2 (423 aa).

2 C3H1-type zinc fingers span residues 2-29 and 31-58; these read STKQ…HDLN and SKPS…HIKP. A disordered region spans residues 59–90; that stretch reads SSRGGGGGAPEDQAGGGGAGGGGAGIGGAGGG. The span at 61-90 shows a compositional bias: gly residues; that stretch reads RGGGGGAPEDQAGGGGAGGGGAGIGGAGGG. A C3H1-type 3 zinc finger spans residues 162–189; that stretch reads QNLPQLCPYAANGHCFYEENCTYLHGDL. The tract at residues 190–219 is makorin-type Cys-His; it reads CEVCGLQVLHPHDSEQRRAHEKMCLAAFEA. Residues 235–289 form an RING-type zinc finger; sequence CSICMEVVVQKANPSDRRFGILSSCCHTFCLACIRKWRCTRTFSNTIIKSCPECR. A C3H1-type 4 zinc finger spans residues 318–347; that stretch reads GVSKKACKYFDQGRGSCPFGGKCLYLHAFP.

The protein localises to the cytoplasm. Its subcellular location is the nucleus. The catalysed reaction is S-ubiquitinyl-[E2 ubiquitin-conjugating enzyme]-L-cysteine + [acceptor protein]-L-lysine = [E2 ubiquitin-conjugating enzyme]-L-cysteine + N(6)-ubiquitinyl-[acceptor protein]-L-lysine.. It participates in protein modification; protein ubiquitination. In terms of biological role, E3 ubiquitin ligase catalyzing the covalent attachment of ubiquitin moieties onto substrate proteins. Inhibits neurogenesis and axis formation during embryonic development by modulating the phosphatidylinositol 3-kinase (PI3K) pathway. Acts downstream of PI3K and akt1 to up-regulate gsk3b mRNA expression. The protein is E3 ubiquitin-protein ligase makorin-2 (mkrn2) of Seriola quinqueradiata (Five-ray yellowtail).